The chain runs to 605 residues: Elongation factor 4 (605 aa).

Residues 9 to 192 (CRIRNFCIIA…SIVHRIPPPA (184 aa)) enclose the tr-type G domain. GTP-binding positions include 21–26 (DHGKST) and 139–142 (NKID).

Belongs to the TRAFAC class translation factor GTPase superfamily. Classic translation factor GTPase family. LepA subfamily.

It is found in the cell inner membrane. It catalyses the reaction GTP + H2O = GDP + phosphate + H(+). Required for accurate and efficient protein synthesis under certain stress conditions. May act as a fidelity factor of the translation reaction, by catalyzing a one-codon backward translocation of tRNAs on improperly translocated ribosomes. Back-translocation proceeds from a post-translocation (POST) complex to a pre-translocation (PRE) complex, thus giving elongation factor G a second chance to translocate the tRNAs correctly. Binds to ribosomes in a GTP-dependent manner. The polypeptide is Elongation factor 4 (Chlorobium chlorochromatii (strain CaD3)).